Consider the following 326-residue polypeptide: Ras association domain-containing protein 2 (326 aa).

The Ras-associating domain maps to 176–264 (YNHKTSVFTP…SKVFLMEKDQ (89 aa)). The 48-residue stretch at 272 to 319 (VAQYIKFEMPVLKSFIQKLQEEEDREVEKLMQKYTVLRLMIRQRLEEI) folds into the SARAH domain.

In terms of assembly, interacts directly with activated KRAS in a GTP-dependent manner. Interacts (via SARAH domain) with STK3/MST2 and STK4/MST1. Post-translationally, phosphorylated by STK3/MST2 and STK4/MST1.

The protein localises to the nucleus. The protein resides in the cytoplasm. It is found in the chromosome. It localises to the centromere. Its subcellular location is the kinetochore. Functionally, potential tumor suppressor. Acts as a KRAS-specific effector protein. May promote apoptosis and cell cycle arrest. Stabilizes STK3/MST2 by protecting it from proteasomal degradation. The sequence is that of Ras association domain-containing protein 2 (Rassf2) from Rattus norvegicus (Rat).